The sequence spans 63 residues: uncharacterized protein (63 aa).

A signal peptide spans 1–18 (MLNSEHFNLIQRALDATA).

This is an uncharacterized protein from Bacillus subtilis (strain 168).